The primary structure comprises 245 residues: AA9 family lytic polysaccharide monooxygenase B (245 aa).

A signal peptide spans 1 to 18 (MKSAIFAAAVLGAAGVSA). Residues histidine 19 and histidine 105 each coordinate Cu(2+). A disulfide bond links cysteine 116 and cysteine 120. Positions 179 and 188 each coordinate O2. Residue tyrosine 190 coordinates Cu(2+).

Belongs to the polysaccharide monooxygenase AA9 family. It depends on Cu(2+) as a cofactor.

Its subcellular location is the secreted. It carries out the reaction [(1-&gt;4)-beta-D-glucosyl]n+m + reduced acceptor + O2 = 4-dehydro-beta-D-glucosyl-[(1-&gt;4)-beta-D-glucosyl]n-1 + [(1-&gt;4)-beta-D-glucosyl]m + acceptor + H2O.. In terms of biological role, lytic polysaccharide monooxygenase (LPMO) that depolymerizes crystalline and amorphous polysaccharides via the oxidation of scissile alpha- or beta-(1-4)-glycosidic bonds, yielding C1 or C4 oxidation products. Catalysis by LPMOs requires the reduction of the active-site copper from Cu(II) to Cu(I) by a reducing agent and H(2)O(2) or O(2) as a cosubstrate. Active on hemicelluloses, including xylan, glucomannan, and xyloglucan. Has no activity on ivory nut mannan (INM), a linear beta-1,4-linked mannan without substitutions. The chain is AA9 family lytic polysaccharide monooxygenase B from Malbranchea cinnamomea (Thermophilic fungus).